A 138-amino-acid polypeptide reads, in one-letter code: Small ribosomal subunit protein uS11c (138 aa).

A disordered region spans residues 1–23; sequence MAKPILRIGSRKNTRSGSRKNVR. The segment covering 9-23 has biased composition (basic residues); it reads GSRKNTRSGSRKNVR.

The protein belongs to the universal ribosomal protein uS11 family. Part of the 30S ribosomal subunit.

It is found in the plastid. It localises to the chloroplast. The protein is Small ribosomal subunit protein uS11c of Aethionema grandiflorum (Persian stone-cress).